The primary structure comprises 441 residues: NSKSQMDKDYYQLQAVLEAERRDRGHDSEKIGDLQARITSLQEEVKHLKHNLERVEGERKEAQDMLNHSEKEKNNLEIDLNYKLKSLQQRLEQEVNEHKVTKARLTDKHQSIEEAKSVAMCEMEKKLKEERDAREKAENRVVQIEKQCSMLDVDLKQSQQKLEHLIENKDRMEDEVKNLTLQLEQESNKRLLLQNELKTQAFEADNLKGLEKQMKQEINTLLEAKRLLEFELAQLTKQYRGNEGQMRELQDQLEAEQYFSTLYKTQVKELKEEIEEKNRENLKKIQELQSEKETLATQLDLAETKAESEQLARGLLEEQYFELTQESKKAASRNRQEITDKDHTLSRLEETNSMLTKDIELLRKENEELTDKMRKAEEEYKLKKEEEINILKAAFEKNINTERTLKTQAVNKLAEIMNRKDFKIDRKKANTQDLRKKKKKK.

Positions Asn-1–Lys-99 form a coiled coil. Residues Glu-114–Ser-353 are SHROOM3 binding. The RhoBD domain occupies Thr-356–Phe-422. Residues Asn-418–Lys-441 are a coiled coil.

It belongs to the protein kinase superfamily. AGC Ser/Thr protein kinase family. In terms of assembly, homodimer. Interacts with RHOA (activated by GTP), RHOB, RHOC, GEM, MYLC2B, RHOE, PPP1R12A, LIMK1, LIMK2, TSG101, CHORDC1, DAPK3, PFN1, PTEN and JIP3. Interacts with FHOD1 in a Src-dependent manner. Interacts with ITGB1BP1 (via N-terminus and PTB domain). Interacts with SHROOM3. Requires Mg(2+) as cofactor.

The protein localises to the cytoplasm. The protein resides in the golgi apparatus membrane. It localises to the cytoskeleton. It is found in the microtubule organizing center. Its subcellular location is the centrosome. The protein localises to the centriole. The protein resides in the cell projection. It localises to the bleb. It is found in the cell membrane. Its subcellular location is the lamellipodium. The protein localises to the ruffle. It catalyses the reaction L-seryl-[protein] + ATP = O-phospho-L-seryl-[protein] + ADP + H(+). The catalysed reaction is L-threonyl-[protein] + ATP = O-phospho-L-threonyl-[protein] + ADP + H(+). Its activity is regulated as follows. Activated by RHOA binding. Inhibited by Y-27632. Its function is as follows. Protein kinase which is a key regulator of the actin cytoskeleton and cell polarity. Involved in regulation of smooth muscle contraction, actin cytoskeleton organization, stress fiber and focal adhesion formation, neurite retraction, cell adhesion and motility via phosphorylation of DAPK3, GFAP, LIMK1, LIMK2, MYL9/MLC2, TPPP, PFN1 and PPP1R12A. Phosphorylates FHOD1 and acts synergistically with it to promote SRC-dependent non-apoptotic plasma membrane blebbing. Phosphorylates JIP3 and regulates the recruitment of JNK to JIP3 upon UVB-induced stress. Acts as a suppressor of inflammatory cell migration by regulating PTEN phosphorylation and stability. Acts as a negative regulator of VEGF-induced angiogenic endothelial cell activation. Required for centrosome positioning and centrosome-dependent exit from mitosis. Plays a role in terminal erythroid differentiation. Inhibits podocyte motility via regulation of actin cytoskeletal dynamics and phosphorylation of CFL1. Promotes keratinocyte terminal differentiation. Involved in osteoblast compaction through the fibronectin fibrillogenesis cell-mediated matrix assembly process, essential for osteoblast mineralization. May regulate closure of the eyelids and ventral body wall by inducing the assembly of actomyosin bundles. This chain is Rho-associated protein kinase 1 (ROCK1), found in Bos taurus (Bovine).